The sequence spans 161 residues: MKRIRIPMTLALGAALTIAPLSFASAEENPAPKMSQTTTAGTTAADVGLNVNLDVLGIANQIADAIKSAQNRDGFVKNLMESSFYASGQKYNVMVFNLSQEYEDHLNGVQFYGSAVYDGITYGIWVFEDGTFTNKGDGGWINWAFRGWFDRDGSTVAFHRP.

A signal peptide spans 1-26; the sequence is MKRIRIPMTLALGAALTIAPLSFASA.

This Bacillus subtilis (strain 168) protein is Stress response protein YvgO (yvgO).